The sequence spans 726 residues: DNA ligase (726 aa).

Residues 34-38, 83-84, and Glu115 contribute to the NAD(+) site; these read DAEYD and SL. Residue Lys117 is the N6-AMP-lysine intermediate of the active site. NAD(+) contacts are provided by Arg138, Glu190, Lys306, and Lys330. The Zn(2+) site is built by Cys424, Cys427, Cys442, and Cys448. Positions 608 to 698 constitute a BRCT domain; it reads SRGNALAGKT…RTADDQATPA (91 aa). Positions 690–726 are disordered; that stretch reads TADDQATPASDRRAATASVPPSDDAPGSPRQLDFDLT.

The protein belongs to the NAD-dependent DNA ligase family. LigA subfamily. Requires Mg(2+) as cofactor. Mn(2+) serves as cofactor.

The enzyme catalyses NAD(+) + (deoxyribonucleotide)n-3'-hydroxyl + 5'-phospho-(deoxyribonucleotide)m = (deoxyribonucleotide)n+m + AMP + beta-nicotinamide D-nucleotide.. Functionally, DNA ligase that catalyzes the formation of phosphodiester linkages between 5'-phosphoryl and 3'-hydroxyl groups in double-stranded DNA using NAD as a coenzyme and as the energy source for the reaction. It is essential for DNA replication and repair of damaged DNA. The protein is DNA ligase of Roseiflexus sp. (strain RS-1).